A 215-amino-acid polypeptide reads, in one-letter code: Nascent polypeptide-associated complex subunit alpha (215 aa).

Residues 1 to 81 (MPGEATETVP…SEKKARKAMS (81 aa)) are disordered. Polar residues predominate over residues 9 to 28 (VPATEQELPQPQAETGSGTE). Residues 29-42 (SDSDESVPELEEQD) show a composition bias toward acidic residues. The residue at position 43 (Ser-43) is a Phosphoserine; by ILK1. Over residues 44–57 (TQTATQQAQLAAAA) the composition is skewed to low complexity. The interval 69–80 (QSRSEKKARKAM) is required for DNA-binding. Residues 70–135 (SRSEKKARKA…AKIEDLSQQA (66 aa)) form the NAC-A/B domain. Residues 93–108 (RVTIRKSKNILFVITK) form an RNA/DNA-binding region. Residue Ser-132 is modified to Phosphoserine. Lys-142 bears the N6-acetyllysine; alternate mark. Residue Lys-142 forms a Glycyl lysine isopeptide (Lys-Gly) (interchain with G-Cter in SUMO2); alternate linkage. At Thr-159 the chain carries Phosphothreonine; by GSK3-beta. Thr-161 carries the post-translational modification Phosphothreonine. Phosphoserine is present on residues Ser-166, Ser-186, Ser-191, and Ser-203. The UBA domain occupies 176-213 (VEVKDIELVMSQANVSRAKAVRALKNNSNDIVNAIMEL).

The protein belongs to the NAC-alpha family. As to quaternary structure, part of the nascent polypeptide-associated complex (NAC), which is a heterodimer of NACA and BTF3 (via NAC-A/B domains). NAC associates with ribosomes through the BTF3/NACB subunit and contacts the ribosomal protein L23, which is positioned near the exiting site. Both subunits can contact nascent polypeptide chains. NACA may also form homodimers, and only this form binds DNA. Interacts with TBP and JUN. Post-translationally, phosphorylation of Ser-43 by ILK during cell adhesion may promote nuclear localization. Phosphorylation of Thr-159 by GSK3B may promote proteasome mediated degradation. Isoform 1 appears to be ubiquitously expressed.

The protein localises to the cytoplasm. Its subcellular location is the nucleus. In terms of biological role, prevents inappropriate targeting of non-secretory polypeptides to the endoplasmic reticulum (ER). Binds to nascent polypeptide chains as they emerge from the ribosome and blocks their interaction with the signal recognition particle (SRP), which normally targets nascent secretory peptides to the ER. Also reduces the inherent affinity of ribosomes for protein translocation sites in the ER membrane (M sites). Isoform 1 and isoform 2 appear to bind DNA and play roles in transcription. Isoform 1 may function as a specific coactivator for JUN, acting to stabilize the interaction of JUN homodimers with promoter elements. The protein is Nascent polypeptide-associated complex subunit alpha (Naca) of Mus musculus (Mouse).